Here is a 183-residue protein sequence, read N- to C-terminus: Probable chemoreceptor glutamine deamidase CheD (183 aa).

This sequence belongs to the CheD family.

The enzyme catalyses L-glutaminyl-[protein] + H2O = L-glutamyl-[protein] + NH4(+). Probably deamidates glutamine residues to glutamate on methyl-accepting chemotaxis receptors (MCPs), playing an important role in chemotaxis. This is Probable chemoreceptor glutamine deamidase CheD from Rhizobium meliloti (strain 1021) (Ensifer meliloti).